A 340-amino-acid polypeptide reads, in one-letter code: Methane monooxygenase component C (340 aa).

The region spanning 1-92 (MYQIVIETED…DLHLLVPYTY (92 aa)) is the 2Fe-2S ferredoxin-type domain. Residues cysteine 37, cysteine 41, cysteine 44, and cysteine 76 each coordinate [2Fe-2S] cluster. The 105-residue stretch at 101-205 (QTNWLAEILA…RGPAGSFFLH (105 aa)) folds into the FAD-binding FR-type domain. 215–229 (VAGGTGLSPVLSMIR) is an FAD binding site.

As to quaternary structure, the soluble methane monooxygenase (sMMO) consists of four components A/MMOH (composed of alpha/MmoX, beta/MmoY and gamma/MmoZ), B/MMOB (MmoB), C/MMOR (MmoC) and D/MMOD (MmoD). The cofactor is [2Fe-2S] cluster.

The enzyme catalyses methane + NADH + O2 + H(+) = methanol + NAD(+) + H2O. It carries out the reaction methane + NADPH + O2 + H(+) = methanol + NADP(+) + H2O. Its function is as follows. Responsible for the initial oxygenation of methane to methanol in methanotrophs. It also catalyzes the monohydroxylation of a variety of unactivated alkenes, alicyclic, aromatic and heterocyclic compounds. The component C is the iron-sulfur flavoprotein of sMMO. The sequence is that of Methane monooxygenase component C (mmoC) from Methylosinus trichosporium.